A 331-amino-acid polypeptide reads, in one-letter code: Cytosolic arginine sensor for mTORC1 subunit 1 (331 aa).

S14 carries the post-translational modification Phosphoserine. In terms of domain architecture, ACT 1 spans 72–139 (AEATWLVMNV…SVVIHTLARE (68 aa)). L-arginine is bound at residue 110–111 (SV). Residues 155–174 (GDDSSNGFPQAQHGPSPTVH) are disordered. Positions 156–174 (DDSSNGFPQAQHGPSPTVH) are enriched in polar residues. One can recognise an ACT 2 domain in the interval 262 to 322 (WRMVRIGGQP…SCVIDILQRR (61 aa)). L-arginine is bound by residues G273, 279–280 (IV), and 299–303 (TFNFD).

It belongs to the GATS family. As to quaternary structure, forms homodimers and heterodimers with CASTOR2. Interacts with the GATOR2 complex which is composed of MIOS, SEC13, SEH1L, WDR24 and WDR59; the interaction is negatively regulated by arginine. Interacts with TM4SF5; the interaction is positively regulated by leucine and is negatively regulated by arginine. In terms of processing, phosphorylation at Ser-14 by AKT1, promoting the interaction between CASTOR1 and RNF167. Post-translationally, ubiquitinated by RNF167 via 'Lys-29'-polyubiquitination, leading to its degradation, releasing the GATOR2 complex. Ubiquitination by RNF167 is promoted by phosphorylation at Ser-14 by AKT1.

It is found in the cytoplasm. The protein localises to the cytosol. Functionally, functions as an intracellular arginine sensor within the amino acid-sensing branch of the TORC1 signaling pathway. As a homodimer or a heterodimer with CASTOR2, binds and inhibits the GATOR subcomplex GATOR2 and thereby mTORC1. Binding of arginine to CASTOR1 allosterically disrupts the interaction of CASTOR1-containing dimers with GATOR2 which can in turn activate mTORC1 and the TORC1 signaling pathway. The chain is Cytosolic arginine sensor for mTORC1 subunit 1 from Rattus norvegicus (Rat).